A 126-amino-acid polypeptide reads, in one-letter code: Phosphoribosyl-AMP cyclohydrolase (126 aa).

A Mg(2+)-binding site is contributed by D76. A Zn(2+)-binding site is contributed by C77. Residues D78 and D80 each coordinate Mg(2+). Zn(2+)-binding residues include C94 and C101.

This sequence belongs to the PRA-CH family. Homodimer. Mg(2+) is required as a cofactor. Zn(2+) serves as cofactor.

It localises to the cytoplasm. It catalyses the reaction 1-(5-phospho-beta-D-ribosyl)-5'-AMP + H2O = 1-(5-phospho-beta-D-ribosyl)-5-[(5-phospho-beta-D-ribosylamino)methylideneamino]imidazole-4-carboxamide. The protein operates within amino-acid biosynthesis; L-histidine biosynthesis; L-histidine from 5-phospho-alpha-D-ribose 1-diphosphate: step 3/9. Its function is as follows. Catalyzes the hydrolysis of the adenine ring of phosphoribosyl-AMP. This is Phosphoribosyl-AMP cyclohydrolase from Ruthia magnifica subsp. Calyptogena magnifica.